The primary structure comprises 425 residues: L-lysine 2,3-aminomutase (425 aa).

A Radical SAM core domain is found at 113 to 325 (HRYPDRVLLL…GLRGHTSGYA (213 aa)). [4Fe-4S] cluster-binding residues include Cys-127, Cys-131, and Cys-134. Residue Lys-339 is modified to N6-(pyridoxal phosphate)lysine.

Belongs to the radical SAM superfamily. KamA family. Homotetramer. Requires [4Fe-4S] cluster as cofactor. Pyridoxal 5'-phosphate serves as cofactor.

It catalyses the reaction L-lysine = (3S)-3,6-diaminohexanoate. Its pathway is amino-acid degradation; L-lysine degradation via acetate pathway. Its function is as follows. Catalyzes the interconversion of L-alpha-lysine and L-beta-lysine. The sequence is that of L-lysine 2,3-aminomutase from Fusobacterium nucleatum subsp. nucleatum (strain ATCC 25586 / DSM 15643 / BCRC 10681 / CIP 101130 / JCM 8532 / KCTC 2640 / LMG 13131 / VPI 4355).